Consider the following 336-residue polypeptide: Phenylalanine--tRNA ligase alpha subunit (336 aa).

A Mg(2+)-binding site is contributed by glutamate 255.

This sequence belongs to the class-II aminoacyl-tRNA synthetase family. Phe-tRNA synthetase alpha subunit type 1 subfamily. In terms of assembly, tetramer of two alpha and two beta subunits. Mg(2+) is required as a cofactor.

The protein resides in the cytoplasm. It carries out the reaction tRNA(Phe) + L-phenylalanine + ATP = L-phenylalanyl-tRNA(Phe) + AMP + diphosphate + H(+). This is Phenylalanine--tRNA ligase alpha subunit from Gemmatimonas aurantiaca (strain DSM 14586 / JCM 11422 / NBRC 100505 / T-27).